A 152-amino-acid chain; its full sequence is Probable flagellum biosynthesis repressor protein FlbT (152 aa).

Belongs to the FlbT family.

Has a post-transcriptional repressor function in flagellum biogenesis. Associates with the 5'-UTR of fljK mRNA and promotes its degradation. The polypeptide is Probable flagellum biosynthesis repressor protein FlbT (Brucella anthropi (strain ATCC 49188 / DSM 6882 / CCUG 24695 / JCM 21032 / LMG 3331 / NBRC 15819 / NCTC 12168 / Alc 37) (Ochrobactrum anthropi)).